The primary structure comprises 187 residues: GTP cyclohydrolase 1 (187 aa).

Cys-78, His-81, and Cys-150 together coordinate Zn(2+).

This sequence belongs to the GTP cyclohydrolase I family. Homomer.

The enzyme catalyses GTP + H2O = 7,8-dihydroneopterin 3'-triphosphate + formate + H(+). It participates in cofactor biosynthesis; 7,8-dihydroneopterin triphosphate biosynthesis; 7,8-dihydroneopterin triphosphate from GTP: step 1/1. This is GTP cyclohydrolase 1 from Brevibacillus brevis (strain 47 / JCM 6285 / NBRC 100599).